Consider the following 257-residue polypeptide: General L-amino acid transport ATP-binding protein AapP (257 aa).

The 235-residue stretch at 18–252 folds into the ABC transporter domain; that stretch reads VEIVNMNKWY…PQHERTKLFL (235 aa). An ATP-binding site is contributed by 50–57; that stretch reads GPSGSGKS.

It belongs to the ABC transporter superfamily.

In terms of biological role, part of a binding-protein-dependent transport system for L-amino acids, affects the uptake as well as the efflux of these amino acids. Probably responsible for energy coupling to the transport system. This is General L-amino acid transport ATP-binding protein AapP (aapP) from Rhizobium johnstonii (strain DSM 114642 / LMG 32736 / 3841) (Rhizobium leguminosarum bv. viciae).